Consider the following 220-residue polypeptide: ATP-dependent dethiobiotin synthetase BioD (220 aa).

An ATP-binding site is contributed by 11-16 (GVGKTF). A Mg(2+)-binding site is contributed by Thr15. Lys36 is a catalytic residue. Thr40 contributes to the substrate binding site. ATP-binding positions include Asp48 and 107 to 110 (EGAG). Mg(2+)-binding residues include Asp48 and Glu107.

It belongs to the dethiobiotin synthetase family. Homodimer. Requires Mg(2+) as cofactor.

It localises to the cytoplasm. It catalyses the reaction (7R,8S)-7,8-diammoniononanoate + CO2 + ATP = (4R,5S)-dethiobiotin + ADP + phosphate + 3 H(+). The protein operates within cofactor biosynthesis; biotin biosynthesis; biotin from 7,8-diaminononanoate: step 1/2. Its function is as follows. Catalyzes a mechanistically unusual reaction, the ATP-dependent insertion of CO2 between the N7 and N8 nitrogen atoms of 7,8-diaminopelargonic acid (DAPA, also called 7,8-diammoniononanoate) to form a ureido ring. This is ATP-dependent dethiobiotin synthetase BioD from Aquifex aeolicus (strain VF5).